Reading from the N-terminus, the 233-residue chain is Phosphatidylserine decarboxylase proenzyme (233 aa).

Residue serine 190 is the Schiff-base intermediate with substrate; via pyruvic acid of the active site. Serine 190 is subject to Pyruvic acid (Ser); by autocatalysis.

Belongs to the phosphatidylserine decarboxylase family. PSD-A subfamily. In terms of assembly, heterodimer of a large membrane-associated beta subunit and a small pyruvoyl-containing alpha subunit. Pyruvate serves as cofactor. Post-translationally, is synthesized initially as an inactive proenzyme. Formation of the active enzyme involves a self-maturation process in which the active site pyruvoyl group is generated from an internal serine residue via an autocatalytic post-translational modification. Two non-identical subunits are generated from the proenzyme in this reaction, and the pyruvate is formed at the N-terminus of the alpha chain, which is derived from the carboxyl end of the proenzyme. The post-translation cleavage follows an unusual pathway, termed non-hydrolytic serinolysis, in which the side chain hydroxyl group of the serine supplies its oxygen atom to form the C-terminus of the beta chain, while the remainder of the serine residue undergoes an oxidative deamination to produce ammonia and the pyruvoyl prosthetic group on the alpha chain.

It localises to the cell membrane. It catalyses the reaction a 1,2-diacyl-sn-glycero-3-phospho-L-serine + H(+) = a 1,2-diacyl-sn-glycero-3-phosphoethanolamine + CO2. It functions in the pathway phospholipid metabolism; phosphatidylethanolamine biosynthesis; phosphatidylethanolamine from CDP-diacylglycerol: step 2/2. In terms of biological role, catalyzes the formation of phosphatidylethanolamine (PtdEtn) from phosphatidylserine (PtdSer). In Xanthobacter autotrophicus (strain ATCC BAA-1158 / Py2), this protein is Phosphatidylserine decarboxylase proenzyme.